Here is a 126-residue protein sequence, read N- to C-terminus: Large ribosomal subunit protein bL20 (126 aa).

It belongs to the bacterial ribosomal protein bL20 family.

Binds directly to 23S ribosomal RNA and is necessary for the in vitro assembly process of the 50S ribosomal subunit. It is not involved in the protein synthesizing functions of that subunit. This chain is Large ribosomal subunit protein bL20, found in Acholeplasma laidlawii (strain PG-8A).